The chain runs to 1164 residues: DNA-directed RNA polymerase subunit beta (1164 aa).

Belongs to the RNA polymerase beta chain family. In terms of assembly, the RNAP catalytic core consists of 2 alpha, 1 beta, 1 beta' and 1 omega subunit. When a sigma factor is associated with the core the holoenzyme is formed, which can initiate transcription.

It catalyses the reaction RNA(n) + a ribonucleoside 5'-triphosphate = RNA(n+1) + diphosphate. DNA-dependent RNA polymerase catalyzes the transcription of DNA into RNA using the four ribonucleoside triphosphates as substrates. The sequence is that of DNA-directed RNA polymerase subunit beta from Saccharopolyspora erythraea (strain ATCC 11635 / DSM 40517 / JCM 4748 / NBRC 13426 / NCIMB 8594 / NRRL 2338).